Here is a 261-residue protein sequence, read N- to C-terminus: Vacuolar protein sorting-associated protein 37D (261 aa).

In terms of domain architecture, VPS37 C-terminal spans 93 to 182 (AENCADKLQR…RRRERSAQPA (90 aa)). The disordered stretch occupies residues 172–261 (LRRRERSAQP…RPSQPEPPHR (90 aa)). Residues 181–195 (PAPTTAAAAAAAATA) are compositionally biased toward low complexity. Pro residues-rich tracts occupy residues 215–224 (GPPPAVPRSL) and 231–261 (PVPP…PPHR).

The protein belongs to the VPS37 family. In terms of assembly, component of the ESCRT-I complex (endosomal sorting complex required for transport I) which consists of TSG101, VPS28, a VPS37 protein (VPS37A to -D) and MVB12A or MVB12B in a 1:1:1:1 stoichiometry. Interacts with TSG101 and MVB12A. Component of the ESCRT-I complex (endosomal sorting complex required for transport I) which consists of TSG101, VPS28, a VPS37 protein (VPS37A to -D) and UBAP1 in a 1:1:1:1 stoichiometry.

It is found in the late endosome membrane. Component of the ESCRT-I complex, a regulator of vesicular trafficking process. Required for the sorting of endocytic ubiquitinated cargos into multivesicular bodies. May be involved in cell growth and differentiation. This Mus musculus (Mouse) protein is Vacuolar protein sorting-associated protein 37D.